Here is a 553-residue protein sequence, read N- to C-terminus: ATP synthase F(1) complex subunit alpha, mitochondrial (553 aa).

A mitochondrion-targeting transit peptide spans 1 to 43 (MLSVRIAAAVARALPRRAGLVSKNALGSSFVGTRNLHASNTRL). Phosphoserine is present on residues Ser-53 and Ser-65. Ser-76 carries the post-translational modification Phosphoserine; alternate. The O-linked (GlcNAc) serine; alternate glycan is linked to Ser-76. Ser-106 carries the phosphoserine modification. Residues Lys-123, Lys-126, and Lys-132 each carry the N6-acetyllysine modification. A Phosphothreonine modification is found at Thr-134. Lys-161 carries the post-translational modification N6-acetyllysine; alternate. Lys-161 carries the N6-succinyllysine; alternate modification. At Ser-166 the chain carries Phosphoserine. Lys-167 carries the post-translational modification N6-acetyllysine; alternate. Position 167 is an N6-succinyllysine; alternate (Lys-167). Ser-184 carries the phosphoserine modification. An Omega-N-methylarginine modification is found at Arg-204. 5 residues coordinate ATP: Gln-215, Gly-217, Lys-218, Thr-219, and Ser-220. Thr-219 provides a ligand contact to Mg(2+). Residues Lys-230 and Lys-239 each carry the N6-acetyllysine; alternate modification. N6-succinyllysine; alternate occurs at positions 230 and 239. At Lys-240 the chain carries N6-acetyllysine. 2 positions are modified to N6-acetyllysine; alternate: Lys-261 and Lys-305. Lys-261 and Lys-305 each carry N6-succinyllysine; alternate. Asp-312 provides a ligand contact to Mg(2+). Lys-427 carries the N6-acetyllysine; alternate modification. Lys-427 carries the post-translational modification N6-succinyllysine; alternate. N6-acetyllysine is present on Lys-434. 2 residues coordinate ATP: Gln-473 and Gln-475. N6-acetyllysine; alternate is present on residues Lys-498, Lys-506, Lys-531, and Lys-539. N6-succinyllysine; alternate occurs at positions 498, 506, 531, and 539. Lys-541 bears the N6-acetyllysine mark.

It belongs to the ATPase alpha/beta chains family. In terms of assembly, homotrimer. Component of the ATP synthase complex composed at least of ATP5F1A/subunit alpha, ATP5F1B/subunit beta, ATP5MC1/subunit c (homooctomer), MT-ATP6/subunit a, MT-ATP8/subunit 8, ATP5ME/subunit e, ATP5MF/subunit f, ATP5MG/subunit g, ATP5MK/subunit k, ATP5MJ/subunit j, ATP5F1C/subunit gamma, ATP5F1D/subunit delta, ATP5F1E/subunit epsilon, ATP5PF/subunit F6, ATP5PB/subunit b, ATP5PD/subunit d, ATP5PO/subunit OSCP. ATP synthase complex consists of a soluble F(1) head domain (subunits alpha(3) and beta(3)) - the catalytic core - and a membrane F(0) domain - the membrane proton channel (subunits c, a, 8, e, f, g, k and j). These two domains are linked by a central stalk (subunits gamma, delta, and epsilon) rotating inside the F1 region and a stationary peripheral stalk (subunits F6, b, d, and OSCP). Interacts with ATPAF2. Interacts with HRG; the interaction occurs on the surface of T-cells and alters the cell morphology when associated with concanavalin (in vitro). Interacts with PLG (angiostatin peptide); the interaction inhibits most of the angiogenic properties of angiostatin. Interacts with BLOC1S1. Interacts with BCL2L1 isoform BCL-X(L); the interaction mediates the association of BCL2L1 isoform BCL-X(L) with the mitochondrial membrane F(1)F(0) ATP synthase and enhances neurons metabolic efficiency. Interacts with CLN5 and PPT1. Interacts with S100A1; this interaction increases F1-ATPase activity. Interacts with ABCB7; this interaction allows the regulation of cellular iron homeostasis and cellular reactive oxygen species (ROS) levels in cardiomyocytes. Acetylated on lysine residues. BLOC1S1 is required for acetylation. Expressed in flagella of epididymal sperm.

The protein localises to the mitochondrion. It localises to the mitochondrion inner membrane. Its subcellular location is the cell membrane. In terms of biological role, subunit alpha, of the mitochondrial membrane ATP synthase complex (F(1)F(0) ATP synthase or Complex V) that produces ATP from ADP in the presence of a proton gradient across the membrane which is generated by electron transport complexes of the respiratory chain. ATP synthase complex consist of a soluble F(1) head domain - the catalytic core - and a membrane F(1) domain - the membrane proton channel. These two domains are linked by a central stalk rotating inside the F(1) region and a stationary peripheral stalk. During catalysis, ATP synthesis in the catalytic domain of F(1) is coupled via a rotary mechanism of the central stalk subunits to proton translocation. In vivo, can only synthesize ATP although its ATP hydrolase activity can be activated artificially in vitro. With the catalytic subunit beta (ATP5F1B), forms the catalytic core in the F(1) domain. Subunit alpha does not bear the catalytic high-affinity ATP-binding sites. The chain is ATP synthase F(1) complex subunit alpha, mitochondrial from Rattus norvegicus (Rat).